The sequence spans 321 residues: Histidine N-alpha-methyltransferase (321 aa).

Tyr-56 is an L-histidine binding site. S-adenosyl-L-methionine-binding positions include Gly-86, Lys-92, Asp-113, and 141–142 (DF). L-histidine is bound by residues Asn-166, Tyr-206, and 282–284 (EVS).

Belongs to the methyltransferase superfamily. EgtD family. Monomer.

It carries out the reaction L-histidine + 3 S-adenosyl-L-methionine = hercynine + 3 S-adenosyl-L-homocysteine + 3 H(+). Its pathway is amino-acid biosynthesis; ergothioneine biosynthesis. Functionally, catalyzes the SAM-dependent triple methylation of the alpha-amino group of histidine to form hercynine, a step in the biosynthesis pathway of ergothioneine. Among all the proteinogenic amino acids, only L-histidine is a substrate. This Mycolicibacterium smegmatis (strain ATCC 700084 / mc(2)155) (Mycobacterium smegmatis) protein is Histidine N-alpha-methyltransferase.